Consider the following 467-residue polypeptide: Proton extrusion protein PxcA (467 aa).

A compositionally biased stretch (polar residues) spans 146 to 161; the sequence is SQVRTTSSQPPENPSL. Disordered regions lie at residues 146–167 and 186–205; these read SQVR…ALRT and PQLI…KADT. Positions 191–203 are enriched in basic and acidic residues; that stretch reads QRTEQSKKSRGKA. The next 4 helical transmembrane spans lie at 249-269, 352-372, 391-411, and 427-447; these read FILL…ALIV, IFSV…IMVL, IIIL…WEVI, and FIFL…KYWI.

This sequence belongs to the CemA family.

The protein resides in the cell inner membrane. In terms of biological role, required for H(+) efflux immediately after light irradiation to form a rapid H(+) concentration gradient across the thylakoid membranes. Together with PxcL, contributes to transient H(+) uptake following dark to light transition. This Nostoc sp. (strain PCC 7120 / SAG 25.82 / UTEX 2576) protein is Proton extrusion protein PxcA.